A 235-amino-acid polypeptide reads, in one-letter code: Sugar fermentation stimulation protein homolog (235 aa).

It belongs to the SfsA family.

This chain is Sugar fermentation stimulation protein homolog, found in Photorhabdus laumondii subsp. laumondii (strain DSM 15139 / CIP 105565 / TT01) (Photorhabdus luminescens subsp. laumondii).